The sequence spans 251 residues: tRNA pseudouridine synthase A (251 aa).

Residue Asp-26 is the Nucleophile of the active site. Tyr-98 is a substrate binding site.

This sequence belongs to the tRNA pseudouridine synthase TruA family. Homodimer.

The enzyme catalyses uridine(38/39/40) in tRNA = pseudouridine(38/39/40) in tRNA. Formation of pseudouridine at positions 38, 39 and 40 in the anticodon stem and loop of transfer RNAs. In Mycolicibacterium paratuberculosis (strain ATCC BAA-968 / K-10) (Mycobacterium paratuberculosis), this protein is tRNA pseudouridine synthase A.